Consider the following 309-residue polypeptide: Carbamate kinase-like protein (309 aa).

Residues 125-144 (NKPVGPFYNTEETARSANPN) form a disordered region.

Belongs to the carbamate kinase family.

The polypeptide is Carbamate kinase-like protein (Mycoplasma pneumoniae (strain ATCC 29342 / M129 / Subtype 1) (Mycoplasmoides pneumoniae)).